Consider the following 364-residue polypeptide: 1-acyl-sn-glycerol-3-phosphate acyltransferase epsilon (364 aa).

2 consecutive transmembrane segments (helical) span residues 15–35 (LLPS…WGVW) and 61–81 (MVLF…GDLP). Residues 93-98 (HQSTVD) carry the HXXXXD motif motif. Residues 344-364 (LYVNTWIYGTLLGCLWVTIKA) traverse the membrane as a helical segment.

The protein belongs to the 1-acyl-sn-glycerol-3-phosphate acyltransferase family. In terms of tissue distribution, widely expressed.

The protein localises to the endoplasmic reticulum membrane. It is found in the nucleus envelope. Its subcellular location is the mitochondrion. The catalysed reaction is a 1-acyl-sn-glycero-3-phosphate + an acyl-CoA = a 1,2-diacyl-sn-glycero-3-phosphate + CoA. It carries out the reaction 1-(9Z-octadecenoyl)-sn-glycero-3-phosphate + tetradecanoyl-CoA = 1-(9Z)-octadecenoyl-2-tetradecanoyl-sn-glycero-3-phosphate + CoA. It catalyses the reaction pentadecanoyl-CoA + 1-(9Z-octadecenoyl)-sn-glycero-3-phosphate = 1-(9Z)-octadecenoyl-2-pentadecanoyl-sn-glycero-3-phosphate + CoA. The enzyme catalyses 1-(9Z-octadecenoyl)-sn-glycero-3-phosphate + octadecanoyl-CoA = 1-(9Z-octadecenoyl)-2-octadecanoyl-sn-glycero-3-phosphate + CoA. The catalysed reaction is nonadecanoyl-CoA + 1-(9Z-octadecenoyl)-sn-glycero-3-phosphate = 1-(9Z)-octadecenoyl-2-nonadecanoyl-sn-glycero-3-phosphate + CoA. It carries out the reaction 1-(9Z-octadecenoyl)-sn-glycero-3-phosphoethanolamine + (9Z)-octadecenoyl-CoA = 1,2-di-(9Z-octadecenoyl)-sn-glycero-3-phosphoethanolamine + CoA. It catalyses the reaction 1-(9Z-octadecenoyl)-sn-glycero-3-phosphocholine + (9Z)-octadecenoyl-CoA = 1,2-di-(9Z-octadecenoyl)-sn-glycero-3-phosphocholine + CoA. The enzyme catalyses 1-(9Z-octadecenoyl)-sn-glycero-3-phospho-(1D-myo-inositol) + (5Z,8Z,11Z,14Z)-eicosatetraenoyl-CoA = 1-(9Z-octadecenoyl)-2-(5Z,8Z,11Z,14Z-eicosatetraenoyl)-sn-glycero-3-phospho-1D-myo-inositol + CoA. The catalysed reaction is 1-(9Z-octadecenoyl)-sn-glycero-3-phospho-L-serine + (9Z)-octadecenoyl-CoA = 1,2-di-(9Z)-octadecenoyl-sn-glycero-3-phospho-L-serine + CoA. It carries out the reaction 1-(9Z-octadecenoyl)-sn-glycero-3-phospho-L-serine + (5Z,8Z,11Z,14Z)-eicosatetraenoyl-CoA = 1-(9Z-octadecenoyl)-2-(5Z,8Z,11Z,14Z-eicosatetraenoyl)-sn-glycero-3-phospho-L-serine + CoA. It catalyses the reaction 1-hexadecanoyl-sn-glycero-3-phosphate + (9Z)-octadecenoyl-CoA = 1-hexadecanoyl-2-(9Z-octadecenoyl)-sn-glycero-3-phosphate + CoA. The enzyme catalyses 1-heptadecanoyl-sn-glycero-3-phosphate + (9Z)-octadecenoyl-CoA = 1-heptadecanoyl-2-(9Z)-octadecenoyl-sn-glycero-3-phosphate + CoA. The catalysed reaction is 1-(5Z,8Z,11Z,14Z-eicosatetraenoyl)-sn-glycero-3-phosphate + (9Z)-octadecenoyl-CoA = 1-(5Z,8Z,11Z,14Z)-eicosatetraenoyl-2-(9Z)-octadecenoyl-sn-glycero-3-phosphate + CoA. It carries out the reaction 1-octadecanoyl-sn-glycero-3-phosphate + (9Z)-octadecenoyl-CoA = 1-octadecanoyl-2-(9Z-octadecenoyl)-sn-glycero-3-phosphate + CoA. It catalyses the reaction 1-(9Z-octadecenoyl)-sn-glycero-3-phosphate + (5Z,8Z,11Z,14Z)-eicosatetraenoyl-CoA = 1-(9Z)-octadecenoyl-2-(5Z,8Z,11Z,14Z)-eicosatetraenoyl-sn-glycero-3-phosphate + CoA. The enzyme catalyses heptadecanoyl-CoA + 1-(9Z-octadecenoyl)-sn-glycero-3-phosphate = 1-(9Z)-octadecenoyl-2-heptadecanoyl-sn-glycero-3-phosphate + CoA. The catalysed reaction is 1-(9Z-octadecenoyl)-sn-glycero-3-phosphocholine + (5Z,8Z,11Z,14Z)-eicosatetraenoyl-CoA = 1-(9Z)-octadecenoyl-2-(5Z,8Z,11Z,14Z)-icosatetraenoyl-sn-glycero-3-phosphocholine + CoA. It carries out the reaction 1-(9Z-octadecenoyl)-sn-glycero-3-phosphate + (9Z)-octadecenoyl-CoA = 1,2-di-(9Z-octadecenoyl)-sn-glycero-3-phosphate + CoA. It catalyses the reaction 1-(9Z-octadecenoyl)-sn-glycero-3-phosphate + hexadecanoyl-CoA = 1-hexadecanoyl-2-(9Z-octadecenoyl)-sn-glycero-3-phosphate + CoA. Its pathway is phospholipid metabolism; CDP-diacylglycerol biosynthesis; CDP-diacylglycerol from sn-glycerol 3-phosphate: step 2/3. Functionally, converts 1-acyl-sn-glycerol-3-phosphate (lysophosphatidic acid or LPA) into 1,2-diacyl-sn-glycerol-3-phosphate (phosphatidic acid or PA) by incorporating an acyl moiety at the sn-2 position of the glycerol backbone. Acts on LPA containing saturated or unsaturated fatty acids C15:0-C20:4 at the sn-1 position using C18:1-CoA as the acyl donor. Also acts on lysophosphatidylethanolamine using oleoyl-CoA, but not arachidonoyl-CoA, and lysophosphatidylinositol using arachidonoyl-CoA, but not oleoyl-CoA. Activity toward lysophosphatidylglycerol not detectable. This Homo sapiens (Human) protein is 1-acyl-sn-glycerol-3-phosphate acyltransferase epsilon (AGPAT5).